Reading from the N-terminus, the 558-residue chain is MTLKKRSSAPELPTSLDEDEEEDSPQPLSNTPFFSMKNLIVATPIILTPLLYGYNLGFVGPYSTMYGYASNCQLYSAKKSCETLTAAKCRWFNASTYVSNTTYGEVCGWADRTTCFLKYSDEAGCLSDSACKWSYSANTCGNQVGYSSIQSGVFAGSLVIGSTMGALMGGYLTKRLDYCKSFLFIGLLSVIGNVLTHVATGLFHYWVLFVARIVLGFPLGWQSITSSHYTDKFAPANHAKTLGTLFQVSVSTGIFVTSFFGLVLGNTIQYDAASNANTMGRMQGLVSVSTLLSIFVVFLPLITKDGYSKSRRGDYEGENSEDASRKAAEEYTMTQMIGPILNGVAMGCVTQLTGINANMNFAPTIMSNLGLQPLVGNIIVMAWNMLATFCVIPLSRRFSMRTLFLFCGFVGSLCCVFLGGIPVYPGVTKSDKAISGIAITGIAIFIALYEMGVGPCFYVLAVDVFPESFRPIGSSITVGVMFIFNLIINICYPIATEGISGGPSGNPNKGQAVAFIFFGCIGVVACVIEYFFLQPWVEPEAKMTDDLDGAAVPEGKHD.

The disordered stretch occupies residues 1-28; the sequence is MTLKKRSSAPELPTSLDEDEEEDSPQPL. The Cytoplasmic portion of the chain corresponds to 1 to 38; it reads MTLKKRSSAPELPTSLDEDEEEDSPQPLSNTPFFSMKN. The chain crosses the membrane as a helical span at residues 39 to 59; that stretch reads LIVATPIILTPLLYGYNLGFV. Residues 60–152 lie on the Extracellular side of the membrane; that stretch reads GPYSTMYGYA…QVGYSSIQSG (93 aa). The helical transmembrane segment at 153-173 threads the bilayer; it reads VFAGSLVIGSTMGALMGGYLT. The Cytoplasmic segment spans residues 174-179; that stretch reads KRLDYC. Residues 180–200 traverse the membrane as a helical segment; that stretch reads KSFLFIGLLSVIGNVLTHVAT. The Extracellular portion of the chain corresponds to 201-204; it reads GLFH. A helical membrane pass occupies residues 205–225; that stretch reads YWVLFVARIVLGFPLGWQSIT. The Cytoplasmic segment spans residues 226–241; the sequence is SSHYTDKFAPANHAKT. A helical membrane pass occupies residues 242–262; that stretch reads LGTLFQVSVSTGIFVTSFFGL. The Extracellular portion of the chain corresponds to 263 to 281; it reads VLGNTIQYDAASNANTMGR. The chain crosses the membrane as a helical span at residues 282-302; it reads MQGLVSVSTLLSIFVVFLPLI. At 303 to 335 the chain is on the cytoplasmic side; that stretch reads TKDGYSKSRRGDYEGENSEDASRKAAEEYTMTQ. A helical membrane pass occupies residues 336–356; the sequence is MIGPILNGVAMGCVTQLTGIN. The Extracellular segment spans residues 357–373; the sequence is ANMNFAPTIMSNLGLQP. Residues 374–394 traverse the membrane as a helical segment; it reads LVGNIIVMAWNMLATFCVIPL. Topologically, residues 395 to 402 are cytoplasmic; that stretch reads SRRFSMRT. The helical transmembrane segment at 403–423 threads the bilayer; the sequence is LFLFCGFVGSLCCVFLGGIPV. Over 424 to 441 the chain is Extracellular; the sequence is YPGVTKSDKAISGIAITG. The helical transmembrane segment at 442–463 threads the bilayer; it reads IAIFIALYEMGVGPCFYVLAVD. The Cytoplasmic segment spans residues 464–478; the sequence is VFPESFRPIGSSITV. The chain crosses the membrane as a helical span at residues 479–499; it reads GVMFIFNLIINICYPIATEGI. Topologically, residues 500-512 are extracellular; it reads SGGPSGNPNKGQA. Residues 513–533 traverse the membrane as a helical segment; the sequence is VAFIFFGCIGVVACVIEYFFL. Over 534–558 the chain is Cytoplasmic; sequence QPWVEPEAKMTDDLDGAAVPEGKHD.

The protein belongs to the major facilitator superfamily. Sugar transporter (TC 2.A.1.1) family.

It is found in the membrane. This chain is Membrane transporter D2, found in Leishmania donovani.